Here is a 285-residue protein sequence, read N- to C-terminus: Vacuolar protein sorting-associated protein 37B (285 aa).

The interaction with IST1 stretch occupies residues 50–170 (ASNRSLAEGN…EMVLKGQRLP (121 aa)). Positions 84–173 (FEAYQIKKTK…LKGQRLPQAL (90 aa)) constitute a VPS37 C-terminal domain. The segment at 175–201 (PLPPRLPELAPTAPLPYPAPEASGPPA) is disordered. Position 218 is an omega-N-methylarginine (R218). Positions 230–285 (GQAVPYPGLQCPPLPPRVGLPTQQGFSSQFVSPYPPPLPQRPPPRLPPHQPGFILQ) are disordered. Residues 250-260 (PTQQGFSSQFV) are compositionally biased toward polar residues. Over residues 262–279 (PYPPPLPQRPPPRLPPHQ) the composition is skewed to pro residues.

It belongs to the VPS37 family. As to quaternary structure, component of the ESCRT-I complex (endosomal sorting complex required for transport I) which consists of TSG101, VPS28, a VPS37 protein (VPS37A to -D) and MVB12A or MVB12B in a 1:1:1:1 stoichiometry. Interacts with TSG101, VPS28, MVB12A and MVB12B. Component of the ESCRT-I complex (endosomal sorting complex required for transport I) which consists of TSG101, VPS28, a VPS37 protein (VPS37A to -D) and UBAP1 in a 1:1:1:1 stoichiometry. Interacts with CEP55. Interacts with IST1. Widely expressed. Expressed in macrophages and lymphocytes.

It localises to the late endosome membrane. Functionally, component of the ESCRT-I complex, a regulator of vesicular trafficking process. Required for the sorting of endocytic ubiquitinated cargos into multivesicular bodies. May be involved in cell growth and differentiation. This Homo sapiens (Human) protein is Vacuolar protein sorting-associated protein 37B (VPS37B).